The primary structure comprises 184 residues: Elongation factor P (184 aa).

Belongs to the elongation factor P family.

The protein localises to the cytoplasm. It participates in protein biosynthesis; polypeptide chain elongation. Its function is as follows. Involved in peptide bond synthesis. Stimulates efficient translation and peptide-bond synthesis on native or reconstituted 70S ribosomes in vitro. Probably functions indirectly by altering the affinity of the ribosome for aminoacyl-tRNA, thus increasing their reactivity as acceptors for peptidyl transferase. The polypeptide is Elongation factor P (Variovorax paradoxus (strain S110)).